A 540-amino-acid polypeptide reads, in one-letter code: Hexose transporter HXT14 (540 aa).

Residues 1–56 are Cytoplasmic-facing; that stretch reads MTAQIPYQHSSGYISHFHNNELDAGRGRDYNVTIKYLDDKEENIEGQAAKISHNAS. The chain crosses the membrane as a helical span at residues 57-76; it reads LHIPVLLCLVISLGGFIFGW. Over 77–119 the chain is Extracellular; that stretch reads DIGTIGGMTNMVSFQEKFGTTNIIHDDETIFVSTKKLTDLQIG. The chain crosses the membrane as a helical span at residues 120–140; sequence LIISIFNISCGVGALTLSKIG. At 141–146 the chain is on the cytoplasmic side; sequence DWIGRK. Residues 147-167 traverse the membrane as a helical segment; the sequence is GGIWFALVVYCIGITIQILSY. Residues 168–177 lie on the Extracellular side of the membrane; sequence GRWYFLTLGR. A helical transmembrane segment spans residues 178-198; it reads AVTGIGVGVTTVLVPMFLSEN. Residues 199–204 are Cytoplasmic-facing; it reads SPLKIR. Residues 205–225 traverse the membrane as a helical segment; sequence GSMVSTYQLIVTFGILMGNIL. Over 226–243 the chain is Extracellular; it reads NFICERCYKDPTQNIAWQ. A helical transmembrane segment spans residues 244 to 264; it reads LPLFLGYIWAIIIGMSLVYVP. The Cytoplasmic portion of the chain corresponds to 265–357; the sequence is ESPQYLAKIK…IMAFQQLSGI (93 aa). A helical transmembrane segment spans residues 358–374; the sequence is NYFFYYGTSVFKGVGIK. At 375–380 the chain is on the extracellular side; that stretch reads DPYITS. Residues 381-398 traverse the membrane as a helical segment; the sequence is IILSSVNFLSTILGIYYV. At 399–405 the chain is on the cytoplasmic side; that stretch reads EKWGHKT. A helical membrane pass occupies residues 406–426; it reads CLLYGSTNLLFYMMTYATVGT. Over 427-440 the chain is Extracellular; sequence FGRETDFSNIVLII. A helical membrane pass occupies residues 441 to 461; it reads VTCCFIFWFAITLGPVTFVLV. Over 462–478 the chain is Cytoplasmic; it reads SELFPLRTRAISMAICT. Residues 479-499 traverse the membrane as a helical segment; that stretch reads FINWMFNFLISLLTPMIVSKI. A topological domain (extracellular) is located at residue aspartate 500. A helical membrane pass occupies residues 501–521; sequence FKLGYIFAACLLALIIFSWIL. The Cytoplasmic portion of the chain corresponds to 522 to 540; sequence VPETRKKNEQEINKIFEPE.

Belongs to the major facilitator superfamily. Sugar transporter (TC 2.A.1.1) family.

It is found in the membrane. Probable glucose transporter. This is Hexose transporter HXT14 (HXT14) from Saccharomyces cerevisiae (strain ATCC 204508 / S288c) (Baker's yeast).